A 294-amino-acid chain; its full sequence is 7,8-dihydropterin-6-methyl-4-(beta-D-ribofuranosyl)-aminobenzene-5'-phosphate synthase (294 aa).

Residues Glu-116, Asp-186, Lys-228, and His-265 each contribute to the substrate site.

It belongs to the metallo-beta-lactamase superfamily. It depends on Mg(2+) as a cofactor.

The catalysed reaction is 4-(beta-D-ribofuranosyl)aminobenzene 5'-phosphate + (7,8-dihydropterin-6-yl)methyl diphosphate = N-[(7,8-dihydropterin-6-yl)methyl]-4-(beta-D-ribofuranosyl)aniline 5'-phosphate + diphosphate. The protein operates within cofactor biosynthesis; 5,6,7,8-tetrahydromethanopterin biosynthesis. Functionally, catalyzes the condensation of 6-hydroxymethyl-7,8-dihydropterin pyrophosphate (DHPP) with 4-(beta-D-ribofuranosyl)-aminobenzene-5'-phosphate (beta-RFA-P) to form 7,8-dihydropterin-6-methyl-4-(beta-D-ribofuranosyl)-aminobenzene-5'-phosphate, a precursor in the biosynthesis of 5,6,7,8-tetrahydromethanopterin (H4MPT). To a lesser extent, is able to condense beta-RFA-P with another arylamine, 1-(4-aminophenyl)-1-deoxy-D-ribitol (APDR), to form 7,8-dihydropterin-6-methyl-1-(4-aminophenyl)-1-deoxy-D-ribitol. Dephosphorylated beta-RFA-P is not a substrate. This Methanocaldococcus jannaschii (strain ATCC 43067 / DSM 2661 / JAL-1 / JCM 10045 / NBRC 100440) (Methanococcus jannaschii) protein is 7,8-dihydropterin-6-methyl-4-(beta-D-ribofuranosyl)-aminobenzene-5'-phosphate synthase.